The primary structure comprises 548 residues: Probable malate:quinone oxidoreductase (548 aa).

It belongs to the MQO family. It depends on FAD as a cofactor.

It catalyses the reaction (S)-malate + a quinone = a quinol + oxaloacetate. Its pathway is carbohydrate metabolism; tricarboxylic acid cycle; oxaloacetate from (S)-malate (quinone route): step 1/1. The sequence is that of Probable malate:quinone oxidoreductase from Escherichia coli O6:H1 (strain CFT073 / ATCC 700928 / UPEC).